Here is a 197-residue protein sequence, read N- to C-terminus: Guanylate kinase (197 aa).

Residues 10-187 enclose the Guanylate kinase-like domain; sequence GSLFIVSAPA…AYQVLRSILI (178 aa). Residue 17–24 coordinates ATP; sequence APAGTGKT.

Belongs to the guanylate kinase family.

The protein localises to the cytoplasm. The catalysed reaction is GMP + ATP = GDP + ADP. Functionally, essential for recycling GMP and indirectly, cGMP. The sequence is that of Guanylate kinase from Protochlamydia amoebophila (strain UWE25).